The chain runs to 355 residues: Protein HGH1 homolog (355 aa).

A disordered region spans residues 324-355 (DEEGDPTPEEIEQMNKKQKLEDEDAQFETDEI). Composition is skewed to acidic residues over residues 325-335 (EEGDPTPEEIE) and 344-355 (EDEDAQFETDEI).

The protein belongs to the HGH1 family.

This Dictyostelium discoideum (Social amoeba) protein is Protein HGH1 homolog.